A 37-amino-acid chain; its full sequence is Large ribosomal subunit protein bL36 (37 aa).

This sequence belongs to the bacterial ribosomal protein bL36 family.

The polypeptide is Large ribosomal subunit protein bL36 (Acidithiobacillus ferrooxidans (strain ATCC 23270 / DSM 14882 / CIP 104768 / NCIMB 8455) (Ferrobacillus ferrooxidans (strain ATCC 23270))).